The primary structure comprises 211 residues: MFIYYINMKTEKTNYIEILIIKLIFFILTPIKIIFFIAKKIIKNPIIYRFIFKYLLYMQNKIIIINNKEYFYRIPKKKEYWEWFSAKPLYVNGKLINEIKTKEQRINFSLGKMIIKESESLTELEYVLLDLFWFGPFQMKYQNILRQNDIIIKKGVKNIKKIFQENNKFKGINLIFQKTDICKIYSGKFYTYERITEDNILLIYVFIKNKD.

The protein belongs to the A.longa ORF167/ORF288 family.

It localises to the plastid. This is an uncharacterized protein from Euglena longa (Euglenophycean alga).